We begin with the raw amino-acid sequence, 250 residues long: uncharacterized protein (250 aa).

Residues 1-17 form the signal peptide; sequence MRTLVLLSSVAILSTLA. 4 N-linked (GlcNAc...) asparagine glycosylation sites follow: Asn-48, Asn-159, Asn-223, and Asn-239.

It is found in the secreted. This is an uncharacterized protein from Caenorhabditis elegans.